Here is a 177-residue protein sequence, read N- to C-terminus: UPF0177 protein YxdF (177 aa).

Transmembrane regions (helical) follow at residues 2 to 22, 30 to 50, 117 to 137, and 152 to 172; these read TLVL…KNTL, IFWL…VTVL, ALVH…SFII, and IVHS…DTFF.

This sequence belongs to the UPF0177 family.

It is found in the cell membrane. This is UPF0177 protein YxdF (yxdF) from Lactococcus lactis subsp. lactis (strain IL1403) (Streptococcus lactis).